Consider the following 116-residue polypeptide: Ribonuclease P protein component (116 aa).

This sequence belongs to the RnpA family. Consists of a catalytic RNA component (M1 or rnpB) and a protein subunit.

The enzyme catalyses Endonucleolytic cleavage of RNA, removing 5'-extranucleotides from tRNA precursor.. Functionally, RNaseP catalyzes the removal of the 5'-leader sequence from pre-tRNA to produce the mature 5'-terminus. It can also cleave other RNA substrates such as 4.5S RNA. The protein component plays an auxiliary but essential role in vivo by binding to the 5'-leader sequence and broadening the substrate specificity of the ribozyme. The chain is Ribonuclease P protein component from Picosynechococcus sp. (strain ATCC 27264 / PCC 7002 / PR-6) (Agmenellum quadruplicatum).